A 99-amino-acid polypeptide reads, in one-letter code: Plastocyanin (99 aa).

The Plastocyanin-like domain maps to valine 1–asparagine 99. Residues histidine 37, cysteine 84, histidine 87, and methionine 92 each contribute to the Cu cation site.

This sequence belongs to the plastocyanin family. The cofactor is Cu(2+).

The protein resides in the plastid. It is found in the chloroplast thylakoid membrane. In terms of biological role, participates in electron transfer between P700 and the cytochrome b6-f complex in photosystem I. The polypeptide is Plastocyanin (PETE) (Sambucus nigra (European elder)).